Here is a 369-residue protein sequence, read N- to C-terminus: S-(hydroxymethyl)glutathione dehydrogenase (369 aa).

The Zn(2+) site is built by cysteine 40, histidine 62, cysteine 92, cysteine 95, cysteine 98, cysteine 106, and cysteine 169.

Belongs to the zinc-containing alcohol dehydrogenase family. Class-III subfamily. As to quaternary structure, homodimer. Zn(2+) serves as cofactor.

The protein resides in the cytoplasm. It carries out the reaction S-(hydroxymethyl)glutathione + NADP(+) = S-formylglutathione + NADPH + H(+). It catalyses the reaction S-(hydroxymethyl)glutathione + NAD(+) = S-formylglutathione + NADH + H(+). The enzyme catalyses a primary alcohol + NAD(+) = an aldehyde + NADH + H(+). The catalysed reaction is a secondary alcohol + NAD(+) = a ketone + NADH + H(+). It carries out the reaction S-nitrosoglutathione + NADH + H(+) = S-(hydroxysulfenamide)glutathione + NAD(+). Its function is as follows. Has high formaldehyde dehydrogenase activity in the presence of glutathione and catalyzes the oxidation of normal alcohols in a reaction that is not GSH-dependent. In addition, hemithiolacetals other than those formed from GSH, including omega-thiol fatty acids, also are substrates. Also acts as a S-nitroso-glutathione reductase by catalyzing the NADH-dependent reduction of S-nitrosoglutathione. The chain is S-(hydroxymethyl)glutathione dehydrogenase (frmA) from Escherichia coli O1:K1 / APEC.